The following is a 639-amino-acid chain: Collagen alpha-1(XII) chain (639 aa).

A VWFA domain is found at 1 to 114 (CRKSLLQAVA…DSLSKIVDDL (114 aa)). 6 consecutive Fibronectin type-III domains span residues 130–219 (APSN…LPVP), 220–310 (IVSL…LPLP), 311–401 (RPQD…VPAP), 402–490 (TNLR…SPKS), 491–585 (GPRN…TVRN), and 586–639 (LRVY…LRNL). Residues 473 to 496 (DESESDDLTGSERTSPKSGPRNLQ) are disordered.

The protein belongs to the fibril-associated collagens with interrupted helices (FACIT) family. As to quaternary structure, trimer of identical chains each containing 190 kDa of non-triple-helical sequences. In terms of processing, the triple-helical tail is stabilized by disulfide bonds at each end. Prolines at the third position of the tripeptide repeating unit (G-X-Y) are hydroxylated in some or all of the chains. Post-translationally, O-glycosylated; glycosaminoglycan of chondroitin-sulfate type.

The protein localises to the secreted. It is found in the extracellular space. It localises to the extracellular matrix. Its function is as follows. Type XII collagen interacts with type I collagen-containing fibrils, the COL1 domain could be associated with the surface of the fibrils, and the COL2 and NC3 domains may be localized in the perifibrillar matrix. This Oryctolagus cuniculus (Rabbit) protein is Collagen alpha-1(XII) chain (COL12A1).